The chain runs to 240 residues: tRNA pseudouridine synthase B (240 aa).

Residue aspartate 54 is the Nucleophile of the active site.

It belongs to the pseudouridine synthase TruB family. Type 1 subfamily.

The catalysed reaction is uridine(55) in tRNA = pseudouridine(55) in tRNA. Responsible for synthesis of pseudouridine from uracil-55 in the psi GC loop of transfer RNAs. This chain is tRNA pseudouridine synthase B, found in Chlorobaculum tepidum (strain ATCC 49652 / DSM 12025 / NBRC 103806 / TLS) (Chlorobium tepidum).